The chain runs to 213 residues: Cytidylate kinase (213 aa).

7–15 (GPAASGKGT) is a binding site for ATP.

This sequence belongs to the cytidylate kinase family. Type 1 subfamily.

It localises to the cytoplasm. It carries out the reaction CMP + ATP = CDP + ADP. It catalyses the reaction dCMP + ATP = dCDP + ADP. The chain is Cytidylate kinase from Rhodospirillum rubrum (strain ATCC 11170 / ATH 1.1.1 / DSM 467 / LMG 4362 / NCIMB 8255 / S1).